The chain runs to 179 residues: MASVTALIIASIVTVAHGQTIVHITLGHNHTLVGPPITSEVIWTKLGSVDYFDIICNKTKPIFVICNRQNLTLINVSKIYNGYYYGYDRSSSQYKNYLVRITQPKLTVPTMTIIKMANKALENFTSPTTPNEKNIPNSMIAIIAAVALGMALIIICMLLYACYYKKFQHKQDPLLNFNI.

N-linked (GlcNAc...) asparagine; by host glycans are attached at residues Asn-29, Asn-57, Asn-70, Asn-75, and Asn-123.

The protein belongs to the adenoviridae E3_20 family.

Its function is as follows. E3 proteins seem to be dispensable for virus growth in tissue culture cells. They are potentially important for virus growth under special conditions; E3 region may help adenoviruses to evade the immune surveillance of the host. The chain is Early E3 20.1 kDa glycoprotein from Homo sapiens (Human).